The chain runs to 499 residues: Cysteine--tRNA ligase (499 aa).

Residue Cys30 coordinates Zn(2+). The 'HIGH' region motif lies at Pro32–Asn42. Zn(2+) contacts are provided by Cys221, His246, and Glu250. The 'KMSKS' region motif lies at Lys279–Ser283. Lys282 provides a ligand contact to ATP.

The protein belongs to the class-I aminoacyl-tRNA synthetase family. Monomer. Requires Zn(2+) as cofactor.

It localises to the cytoplasm. The enzyme catalyses tRNA(Cys) + L-cysteine + ATP = L-cysteinyl-tRNA(Cys) + AMP + diphosphate. This Cereibacter sphaeroides (strain ATCC 17023 / DSM 158 / JCM 6121 / CCUG 31486 / LMG 2827 / NBRC 12203 / NCIMB 8253 / ATH 2.4.1.) (Rhodobacter sphaeroides) protein is Cysteine--tRNA ligase.